Here is a 676-residue protein sequence, read N- to C-terminus: UvrABC system protein C (676 aa).

Positions 16-95 (VEPGVYRFRD…IKEFDPRFNI (80 aa)) constitute a GIY-YIG domain. One can recognise a UVR domain in the interval 208–243 (DRLVRDLERKMTAAAEDLDFERAARLRDDIGALRRA).

The protein belongs to the UvrC family. As to quaternary structure, interacts with UvrB in an incision complex.

The protein resides in the cytoplasm. Its function is as follows. The UvrABC repair system catalyzes the recognition and processing of DNA lesions. UvrC both incises the 5' and 3' sides of the lesion. The N-terminal half is responsible for the 3' incision and the C-terminal half is responsible for the 5' incision. This chain is UvrABC system protein C, found in Mycobacterium sp. (strain JLS).